The sequence spans 612 residues: Putative pentatricopeptide repeat-containing protein At5g40405 (612 aa).

PPR repeat units follow at residues T70–L104, D107–N141, D142–P172, D173–R203, D204–V238, N239–I273, T274–K304, N305–P339, N340–P375, and Q376–A410. Positions V411–N486 are type E motif. A type E(+) motif region spans residues G487–R517. The interval L518–W612 is type DYW motif.

Belongs to the PPR family. PCMP-H subfamily.

The chain is Putative pentatricopeptide repeat-containing protein At5g40405 (PCMP-H14) from Arabidopsis thaliana (Mouse-ear cress).